The primary structure comprises 69 residues: Small, acid-soluble spore protein 1 (69 aa).

Belongs to the alpha/beta-type SASP family.

SASP are bound to spore DNA. They are double-stranded DNA-binding proteins that cause DNA to change to an a-like conformation. They protect the DNA backbone from chemical and enzymatic cleavage and are thus involved in dormant spore's high resistance to UV light. This chain is Small, acid-soluble spore protein 1 (Su-1), found in Sporosarcina ureae.